Here is a 136-residue protein sequence, read N- to C-terminus: Salivary protein 15 Iric-2 (136 aa).

Positions 1–22 are cleaved as a signal peptide; it reads MESFVAMKVVCIVLLFVIAAEA. N-linked (GlcNAc...) asparagine glycosylation is present at Asn-105. A CD4-binding region spans residues 117–136; the sequence is GPKNQTCENKDQCVPHIPGC.

This sequence belongs to the salp15 family. In terms of assembly, interacts with host CD4. Interacts with host DC-SIGN (CD209). Interacts with Borrelia outer surface protein C (OspC). Expressed in salivary glands. Detected in fed adult female.

The protein resides in the secreted. In terms of biological role, salivary tick protein that downregulates host immune system by binding to both dendritic cells, and CD4(+) T cells. Specifically binds to the CD4 coreceptor on T cells. This interaction prevents the activation of the Src kinase, Lck, and its downstream substrate Zap-70, and results in deficient activation of PLCgamma1, the repression of calcium fluxes triggered by T-cell antigen receptor (TCR) ligation, and a subsequent reduction in interleukin-2 production. This salivary protein also binds to DC-SIGN (CD209) on dendritic cells (DC) and activates the Raf-1 kinase/MEK signaling pathway that results in down-regulating expression of pro-inflammatory cytokines. Furthermore, it inhibits T cell proliferation induced by DCs. In addition, it inhibits in vitro keratinocyte inflammation induced by Borrelia burgdorferi or by the major outer surface protein (OspC) of Borrelia. In addition, it downregulates chemokines and monocyte chemoattractant protein 1, as well as several antimicrobial peptides such as defensins, cathelicidin, psoriasin, and RNase 7. Apart from its immunomodulatory activities, it is also associated with protection of Borrelia spirochetes from antibody-mediated killing through its binding to OspC. In vivo, tests on different immune disease animal models show promising therapeutic results, e.g., in inhibiting HIV infection, experimental autoimmune encephalomyelitis, transplantation rejection, and asthma. This is Salivary protein 15 Iric-2 from Ixodes ricinus (Common tick).